Reading from the N-terminus, the 329-residue chain is GTPase Obg (329 aa).

The Obg domain maps to 1–159; the sequence is MQFIDQARIT…WPLQLELKLL (159 aa). The 169-residue stretch at 160-328 folds into the OBG-type G domain; that stretch reads AEVGIIGLPN…LLAETWVELG (169 aa). ATP contacts are provided by residues 166–173, 191–195, 213–216, 280–283, and 309–311; these read GLPNAGKS, FTTLV, DIPG, NKQE, and SAA. Mg(2+) is bound by residues Ser173 and Thr193.

This sequence belongs to the TRAFAC class OBG-HflX-like GTPase superfamily. OBG GTPase family. Monomer. It depends on Mg(2+) as a cofactor.

Its subcellular location is the cytoplasm. An essential GTPase which binds GTP, GDP and possibly (p)ppGpp with moderate affinity, with high nucleotide exchange rates and a fairly low GTP hydrolysis rate. Plays a role in control of the cell cycle, stress response, ribosome biogenesis and in those bacteria that undergo differentiation, in morphogenesis control. This Synechococcus sp. (strain CC9605) protein is GTPase Obg.